The following is a 205-amino-acid chain: Small ribosomal subunit protein uS4 (205 aa).

In terms of domain architecture, S4 RNA-binding spans 91 to 149; it reads MRLDALVLRAAFARSISQARQLVVHRHILVDGKLVDRPSYSVSPGQTVKVKPKSVPLDP.

It belongs to the universal ribosomal protein uS4 family. In terms of assembly, part of the 30S ribosomal subunit. Contacts protein S5. The interaction surface between S4 and S5 is involved in control of translational fidelity.

Its function is as follows. One of the primary rRNA binding proteins, it binds directly to 16S rRNA where it nucleates assembly of the body of the 30S subunit. Functionally, with S5 and S12 plays an important role in translational accuracy. This chain is Small ribosomal subunit protein uS4, found in Tropheryma whipplei (strain TW08/27) (Whipple's bacillus).